We begin with the raw amino-acid sequence, 308 residues long: GTPase IMAP family member 5 (308 aa).

The Cytoplasmic segment spans residues 1–283 (MEHLQKSTYG…VKSCWSSHTA (283 aa)). Residues 24–227 (SSCLRILLVG…HSNDLFLHAE (204 aa)) enclose the AIG1-type G domain. GTP is bound by residues 33–41 (GKSGCGKSA), Ser-54, 151–153 (RKE), and Asn-188. Residues 284-304 (ACALLIVLGLTLLTTFINLCI) traverse the membrane as a helical; Anchor for type IV membrane protein segment. The Mitochondrial intermembrane portion of the chain corresponds to 305 to 308 (SRCK).

It belongs to the TRAFAC class TrmE-Era-EngA-EngB-Septin-like GTPase superfamily. AIG1/Toc34/Toc159-like paraseptin GTPase family. IAN subfamily. As to quaternary structure, interacts with BAD, BAK1, BAX, BCL2, BCL2L1/Bcl-xL and BCL2L11/BimEL. The interaction with BAX is increased, when cells initiate apoptosis upon IL2 withdrawal. Forms a complex with BCL2L1 or MCL1 and HSPA8/HSC70; the interaction between HSPA8 and BCL2L1 or MCL1 is impaired in the absence of GIMAP5. May interact (via N-terminus) with microtubules. As to expression, expressed in thymus (in thymocytes), spleen (in splenocytes), lymph node and lung. Highly expressed in T lymphocytes. Expressed in B cells and in distinct lineages of hematopoietic bone marrow cells, including natural killer, B, T, myeloid and erythroid lineages. Expressed in liver endothelial cells.

Its subcellular location is the lysosome. The protein localises to the lysosome membrane. It localises to the endosome. It is found in the multivesicular body membrane. The protein resides in the endosome membrane. Functionally, plays a role in T lymphocyte development and the optimal generation of CD4/CD8 double-positive thymocytes. Inhibitor of GSK3A. May act by sequestering GSK3A in cytoplasmic vesicles and impairing its translocation to the nucleus. Consequently, impairs GSK3A-dependent transcriptional program and regulation of the DNA damage response occurring during T cells proliferation. Required for the survival of bone marrow hematopoietic stem cells, as well as of peripheral T cells, natural killer (NK) and NK T-cell development and the maintenance of normal liver function. May promote the survival of mature T lymphocytes upon cytokine withdrawal. May regulate Ca(2+) homeostasis by modulating lysosomal Ca(2+) stores, preventing its accumulation in the absence of T cell activation. May play a role in mitochondrial DNA segregation in hematopoietic tissues. Is a regulator of liver endothelial cell homeostasis. This Mus musculus (Mouse) protein is GTPase IMAP family member 5 (Gimap5).